The sequence spans 334 residues: N-acetyl-gamma-glutamyl-phosphate reductase (334 aa).

Cys-149 is an active-site residue.

It belongs to the NAGSA dehydrogenase family. Type 1 subfamily.

The protein localises to the cytoplasm. It carries out the reaction N-acetyl-L-glutamate 5-semialdehyde + phosphate + NADP(+) = N-acetyl-L-glutamyl 5-phosphate + NADPH + H(+). It functions in the pathway amino-acid biosynthesis; L-arginine biosynthesis; N(2)-acetyl-L-ornithine from L-glutamate: step 3/4. Functionally, catalyzes the NADPH-dependent reduction of N-acetyl-5-glutamyl phosphate to yield N-acetyl-L-glutamate 5-semialdehyde. This chain is N-acetyl-gamma-glutamyl-phosphate reductase, found in Sulfurimonas denitrificans (strain ATCC 33889 / DSM 1251) (Thiomicrospira denitrificans (strain ATCC 33889 / DSM 1251)).